A 601-amino-acid polypeptide reads, in one-letter code: Putative helicase 7 (601 aa).

In terms of domain architecture, Helicase ATP-binding spans 17 to 182 (QSFLMSDKNL…IIDAEIIKTD (166 aa)). 30–37 (APTGTGKS) contacts ATP. Positions 129-132 (DEIH) match the DEAH box motif. The region spanning 208 to 375 (LKEDFIKKMV…VLEDFLLALI (168 aa)) is the Helicase C-terminal domain.

The sequence is that of Putative helicase 7 (SIFV0007) from Saccharolobus islandicus (Sulfolobus islandicus).